Consider the following 590-residue polypeptide: Arginine--tRNA ligase (590 aa).

A 'HIGH' region motif is present at residues 126–136 (PNVAKEMHVGH).

It belongs to the class-I aminoacyl-tRNA synthetase family. In terms of assembly, monomer.

Its subcellular location is the cytoplasm. It carries out the reaction tRNA(Arg) + L-arginine + ATP = L-arginyl-tRNA(Arg) + AMP + diphosphate. The protein is Arginine--tRNA ligase of Streptomyces avermitilis (strain ATCC 31267 / DSM 46492 / JCM 5070 / NBRC 14893 / NCIMB 12804 / NRRL 8165 / MA-4680).